We begin with the raw amino-acid sequence, 828 residues long: Leucine--tRNA ligase (828 aa).

The 'HIGH' region motif lies at 36-46; it reads PYPSGKIHIGH. The 'KMSKS' region motif lies at 595-599; sequence KMSKS. Lysine 598 lines the ATP pocket.

The protein belongs to the class-I aminoacyl-tRNA synthetase family.

The protein resides in the cytoplasm. It catalyses the reaction tRNA(Leu) + L-leucine + ATP = L-leucyl-tRNA(Leu) + AMP + diphosphate. This Rickettsia typhi (strain ATCC VR-144 / Wilmington) protein is Leucine--tRNA ligase.